The primary structure comprises 574 residues: Membrane protein insertase YidC (574 aa).

The next 6 membrane-spanning stretches (helical) occupy residues 6–26 (VFLIFAWLMVAALLWMEWGKE), 350–370 (VIDYSRFSIMAIIGQGLFWVL), 376–396 (FLHNWGWAIVGLVVLLRLVLY), 447–467 (GGCLPLLIQMPIFFALYWVLV), 491–511 (FILPALNIAIMWATQKLTPTP), and 525–545 (PLVFGAMMAFVPSGLVLYWVV).

This sequence belongs to the OXA1/ALB3/YidC family. Type 1 subfamily. In terms of assembly, interacts with the Sec translocase complex via SecD. Specifically interacts with transmembrane segments of nascent integral membrane proteins during membrane integration.

It localises to the cell inner membrane. Functionally, required for the insertion and/or proper folding and/or complex formation of integral membrane proteins into the membrane. Involved in integration of membrane proteins that insert both dependently and independently of the Sec translocase complex, as well as at least some lipoproteins. Aids folding of multispanning membrane proteins. In Xanthomonas oryzae pv. oryzae (strain KACC10331 / KXO85), this protein is Membrane protein insertase YidC.